The chain runs to 72 residues: Translation initiation factor IF-1 (72 aa).

The region spanning 1–72 is the S1-like domain; that stretch reads MARDDVIEVD…DRGRITFRYK (72 aa).

Belongs to the IF-1 family. In terms of assembly, component of the 30S ribosomal translation pre-initiation complex which assembles on the 30S ribosome in the order IF-2 and IF-3, IF-1 and N-formylmethionyl-tRNA(fMet); mRNA recruitment can occur at any time during PIC assembly.

It is found in the cytoplasm. In terms of biological role, one of the essential components for the initiation of protein synthesis. Stabilizes the binding of IF-2 and IF-3 on the 30S subunit to which N-formylmethionyl-tRNA(fMet) subsequently binds. Helps modulate mRNA selection, yielding the 30S pre-initiation complex (PIC). Upon addition of the 50S ribosomal subunit IF-1, IF-2 and IF-3 are released leaving the mature 70S translation initiation complex. This is Translation initiation factor IF-1 from Helicobacter acinonychis (strain Sheeba).